Reading from the N-terminus, the 246-residue chain is Dihydromethanopterin reductase (acceptor) (246 aa).

2 consecutive 4Fe-4S ferredoxin-type domains span residues 150–178 (LPYA…VKRD) and 179–208 (NFVE…EGKE). Residues C159, C162, C165, C169, C188, C191, C194, and C198 each contribute to the [4Fe-4S] cluster site.

As to quaternary structure, homodimer. [4Fe-4S] cluster serves as cofactor.

It catalyses the reaction 5,6,7,8-tetrahydromethanopterin + A = 7,8-dihydromethanopterin + AH2. Its pathway is cofactor biosynthesis; 5,6,7,8-tetrahydromethanopterin biosynthesis. In terms of biological role, involved in the biosynthesis of tetrahydromethanopterin, a coenzyme used in methanogenesis. Catalyzes the reduction of dihydromethanopterin (H(2)MPT) to tetrahydromethanopterin (H(4)MPT). Ferredoxin may serve as an electron donor. In Methanocaldococcus jannaschii (strain ATCC 43067 / DSM 2661 / JAL-1 / JCM 10045 / NBRC 100440) (Methanococcus jannaschii), this protein is Dihydromethanopterin reductase (acceptor).